We begin with the raw amino-acid sequence, 119 residues long: Holo-[acyl-carrier-protein] synthase (119 aa).

Residues Asp6 and Glu51 each contribute to the Mg(2+) site.

It belongs to the P-Pant transferase superfamily. AcpS family. Mg(2+) is required as a cofactor.

The protein resides in the cytoplasm. The enzyme catalyses apo-[ACP] + CoA = holo-[ACP] + adenosine 3',5'-bisphosphate + H(+). Transfers the 4'-phosphopantetheine moiety from coenzyme A to a Ser of acyl-carrier-protein. In Sulfurovum sp. (strain NBC37-1), this protein is Holo-[acyl-carrier-protein] synthase.